Here is a 192-residue protein sequence, read N- to C-terminus: Adenylate kinase (192 aa).

ATP is bound at residue Gly-10–Thr-15. The tract at residues Ser-30–Val-59 is NMP. Residues Thr-31, Arg-36, Ala-57–Val-59, Gly-85–Arg-88, and Gln-92 contribute to the AMP site. The tract at residues Arg-126–Asp-142 is LID. Arg-127 is a binding site for ATP. Residues Arg-139 and Arg-150 each coordinate AMP. Ile-178 contributes to the ATP binding site.

This sequence belongs to the adenylate kinase family. As to quaternary structure, monomer.

Its subcellular location is the cytoplasm. It carries out the reaction AMP + ATP = 2 ADP. It participates in purine metabolism; AMP biosynthesis via salvage pathway; AMP from ADP: step 1/1. Catalyzes the reversible transfer of the terminal phosphate group between ATP and AMP. Plays an important role in cellular energy homeostasis and in adenine nucleotide metabolism. The chain is Adenylate kinase from Bartonella tribocorum (strain CIP 105476 / IBS 506).